We begin with the raw amino-acid sequence, 398 residues long: Putative F-box protein At4g17780 (398 aa).

An F-box domain is found at proline 8–serine 55.

This Arabidopsis thaliana (Mouse-ear cress) protein is Putative F-box protein At4g17780.